The primary structure comprises 49 residues: MRVNITLACTECGDRNYITTKNKRNNPERIEMKKYCPRLNKYTLHRETK.

The protein belongs to the bacterial ribosomal protein bL33 family.

In Staphylococcus epidermidis (strain ATCC 12228 / FDA PCI 1200), this protein is Large ribosomal subunit protein bL33B (rpmG2).